Consider the following 71-residue polypeptide: Putative membrane protein insertion efficiency factor (71 aa).

Belongs to the UPF0161 family.

It localises to the cell membrane. In terms of biological role, could be involved in insertion of integral membrane proteins into the membrane. This chain is Putative membrane protein insertion efficiency factor, found in Clostridium acetobutylicum (strain ATCC 824 / DSM 792 / JCM 1419 / IAM 19013 / LMG 5710 / NBRC 13948 / NRRL B-527 / VKM B-1787 / 2291 / W).